We begin with the raw amino-acid sequence, 129 residues long: D-ribose pyranase (129 aa).

The active-site Proton donor is the His20. Residues Asp28, His96, and 118–120 (YAN) each bind substrate.

Belongs to the RbsD / FucU family. RbsD subfamily. Homodecamer.

It is found in the cytoplasm. The enzyme catalyses beta-D-ribopyranose = beta-D-ribofuranose. The protein operates within carbohydrate metabolism; D-ribose degradation; D-ribose 5-phosphate from beta-D-ribopyranose: step 1/2. Catalyzes the interconversion of beta-pyran and beta-furan forms of D-ribose. The polypeptide is D-ribose pyranase (Halalkalibacterium halodurans (strain ATCC BAA-125 / DSM 18197 / FERM 7344 / JCM 9153 / C-125) (Bacillus halodurans)).